Here is a 252-residue protein sequence, read N- to C-terminus: 5'-nucleotidase SurE (252 aa).

A divalent metal cation-binding residues include Asp8, Asp9, Ser39, and Asn91.

This sequence belongs to the SurE nucleotidase family. It depends on a divalent metal cation as a cofactor.

It is found in the cytoplasm. It catalyses the reaction a ribonucleoside 5'-phosphate + H2O = a ribonucleoside + phosphate. Nucleotidase that shows phosphatase activity on nucleoside 5'-monophosphates. In Bordetella bronchiseptica (strain ATCC BAA-588 / NCTC 13252 / RB50) (Alcaligenes bronchisepticus), this protein is 5'-nucleotidase SurE.